Consider the following 701-residue polypeptide: 1,4-alpha-glucan branching enzyme GlgB (701 aa).

Catalysis depends on aspartate 381, which acts as the Nucleophile. Glutamate 434 (proton donor) is an active-site residue.

This sequence belongs to the glycosyl hydrolase 13 family. GlgB subfamily. Monomer.

The enzyme catalyses Transfers a segment of a (1-&gt;4)-alpha-D-glucan chain to a primary hydroxy group in a similar glucan chain.. Its pathway is glycan biosynthesis; glycogen biosynthesis. Catalyzes the formation of the alpha-1,6-glucosidic linkages in glycogen by scission of a 1,4-alpha-linked oligosaccharide from growing alpha-1,4-glucan chains and the subsequent attachment of the oligosaccharide to the alpha-1,6 position. The chain is 1,4-alpha-glucan branching enzyme GlgB from Jannaschia sp. (strain CCS1).